Here is a 715-residue protein sequence, read N- to C-terminus: 1,4-alpha-glucan branching enzyme GlgB (715 aa).

D396 serves as the catalytic Nucleophile. The Proton donor role is filled by E449.

The protein belongs to the glycosyl hydrolase 13 family. GlgB subfamily. As to quaternary structure, monomer.

The enzyme catalyses Transfers a segment of a (1-&gt;4)-alpha-D-glucan chain to a primary hydroxy group in a similar glucan chain.. Its pathway is glycan biosynthesis; glycogen biosynthesis. Its function is as follows. Catalyzes the formation of the alpha-1,6-glucosidic linkages in glycogen by scission of a 1,4-alpha-linked oligosaccharide from growing alpha-1,4-glucan chains and the subsequent attachment of the oligosaccharide to the alpha-1,6 position. The polypeptide is 1,4-alpha-glucan branching enzyme GlgB (Aliivibrio fischeri (strain ATCC 700601 / ES114) (Vibrio fischeri)).